Reading from the N-terminus, the 421-residue chain is UDP-N-acetylglucosamine 1-carboxyvinyltransferase (421 aa).

22-23 (KN) contacts phosphoenolpyruvate. Arg-94 contributes to the UDP-N-acetyl-alpha-D-glucosamine binding site. Cys-118 serves as the catalytic Proton donor. Residue Cys-118 is modified to 2-(S-cysteinyl)pyruvic acid O-phosphothioketal. UDP-N-acetyl-alpha-D-glucosamine contacts are provided by residues 123 to 127 (RPMDL), Asp-308, and Ile-330.

It belongs to the EPSP synthase family. MurA subfamily.

Its subcellular location is the cytoplasm. The enzyme catalyses phosphoenolpyruvate + UDP-N-acetyl-alpha-D-glucosamine = UDP-N-acetyl-3-O-(1-carboxyvinyl)-alpha-D-glucosamine + phosphate. It functions in the pathway cell wall biogenesis; peptidoglycan biosynthesis. Functionally, cell wall formation. Adds enolpyruvyl to UDP-N-acetylglucosamine. This chain is UDP-N-acetylglucosamine 1-carboxyvinyltransferase, found in Ruegeria pomeroyi (strain ATCC 700808 / DSM 15171 / DSS-3) (Silicibacter pomeroyi).